Consider the following 377-residue polypeptide: Phosphoserine aminotransferase (377 aa).

Arg43 is a binding site for L-glutamate. Positions 105, 164, 189, and 212 each coordinate pyridoxal 5'-phosphate. Lys213 carries the post-translational modification N6-(pyridoxal phosphate)lysine. Residue 254 to 255 participates in pyridoxal 5'-phosphate binding; it reads NT.

The protein belongs to the class-V pyridoxal-phosphate-dependent aminotransferase family. SerC subfamily. Homodimer. The cofactor is pyridoxal 5'-phosphate.

It localises to the cytoplasm. It catalyses the reaction O-phospho-L-serine + 2-oxoglutarate = 3-phosphooxypyruvate + L-glutamate. The catalysed reaction is 4-(phosphooxy)-L-threonine + 2-oxoglutarate = (R)-3-hydroxy-2-oxo-4-phosphooxybutanoate + L-glutamate. The protein operates within amino-acid biosynthesis; L-serine biosynthesis; L-serine from 3-phospho-D-glycerate: step 2/3. It functions in the pathway cofactor biosynthesis; pyridoxine 5'-phosphate biosynthesis; pyridoxine 5'-phosphate from D-erythrose 4-phosphate: step 3/5. Functionally, catalyzes the reversible conversion of 3-phosphohydroxypyruvate to phosphoserine and of 3-hydroxy-2-oxo-4-phosphonooxybutanoate to phosphohydroxythreonine. This chain is Phosphoserine aminotransferase, found in Bordetella bronchiseptica (strain ATCC BAA-588 / NCTC 13252 / RB50) (Alcaligenes bronchisepticus).